A 204-amino-acid chain; its full sequence is TPR repeat-containing protein RHE_CH03534.1 (204 aa).

Residues 1-29 (MSAMRLFALTSAMLPLAFILSTSPFPATA) form the signal peptide. TPR repeat units follow at residues 84–117 (INLL…KPDY), 118–151 (AESW…EPRH), and 153–185 (GALS…YPAD).

This is TPR repeat-containing protein RHE_CH03534.1 from Rhizobium etli (strain ATCC 51251 / DSM 11541 / JCM 21823 / NBRC 15573 / CFN 42).